The sequence spans 263 residues: Ribonuclease HII (263 aa).

The RNase H type-2 domain maps to 71 to 262; it reads QAIAGIDEVG…VKSMCCDSTN (192 aa). A divalent metal cation contacts are provided by aspartate 77, glutamate 78, and aspartate 172.

The protein belongs to the RNase HII family. Mn(2+) serves as cofactor. Mg(2+) is required as a cofactor.

The protein resides in the cytoplasm. It catalyses the reaction Endonucleolytic cleavage to 5'-phosphomonoester.. Its function is as follows. Endonuclease that specifically degrades the RNA of RNA-DNA hybrids. The polypeptide is Ribonuclease HII (Streptococcus pyogenes serotype M12 (strain MGAS2096)).